Consider the following 122-residue polypeptide: Serum amyloid A-3 protein (122 aa).

A signal peptide spans 1 to 18 (MKPSIAIILCILILGVDS). Positions 87 to 122 (TGHGAEDSRADQFANEWGRSGKDPNHFRPAGLPKRY) are disordered.

It belongs to the SAA family. Found in various tissues.

It localises to the secreted. Functionally, major acute phase reactant. Apolipoprotein of the HDL complex. In vitro exhibits antimicrobial activity against Escherichia coli, Streptococcus uberis and Pseudomonas aeruginosa. The polypeptide is Serum amyloid A-3 protein (Saa3) (Mus musculus (Mouse)).